The following is a 372-amino-acid chain: Cell division protein FtsZ 1 (372 aa).

GTP-binding positions include Gly-51 to Asn-55, Gly-138 to Gly-140, Glu-169, Arg-173, and Asp-216. The segment at Gln-351–Leu-372 is disordered. The span at Glu-353–Val-362 shows a compositional bias: acidic residues.

The protein belongs to the FtsZ family. As to quaternary structure, homodimer. Polymerizes to form a dynamic ring structure in a strictly GTP-dependent manner. Interacts directly with several other division proteins.

It localises to the cytoplasm. Essential cell division protein that forms a contractile ring structure (Z ring) at the future cell division site. The regulation of the ring assembly controls the timing and the location of cell division. One of the functions of the FtsZ ring is to recruit other cell division proteins to the septum to produce a new cell wall between the dividing cells. Binds GTP and shows GTPase activity. This is Cell division protein FtsZ 1 from Pyrococcus abyssi (strain GE5 / Orsay).